The following is a 473-amino-acid chain: ATP synthase subunit beta (473 aa).

An ATP-binding site is contributed by 153–160 (GGAGVGKT).

It belongs to the ATPase alpha/beta chains family. As to quaternary structure, F-type ATPases have 2 components, CF(1) - the catalytic core - and CF(0) - the membrane proton channel. CF(1) has five subunits: alpha(3), beta(3), gamma(1), delta(1), epsilon(1). CF(0) has three main subunits: a(1), b(2) and c(9-12). The alpha and beta chains form an alternating ring which encloses part of the gamma chain. CF(1) is attached to CF(0) by a central stalk formed by the gamma and epsilon chains, while a peripheral stalk is formed by the delta and b chains.

The protein localises to the cell inner membrane. The catalysed reaction is ATP + H2O + 4 H(+)(in) = ADP + phosphate + 5 H(+)(out). Produces ATP from ADP in the presence of a proton gradient across the membrane. The catalytic sites are hosted primarily by the beta subunits. This Rickettsia canadensis (strain McKiel) protein is ATP synthase subunit beta.